Consider the following 307-residue polypeptide: Putative S-adenosyl-L-methionine-dependent methyltransferase Mflv_5025 (307 aa).

S-adenosyl-L-methionine-binding positions include aspartate 130 and 159-160; that span reads DL.

It belongs to the UPF0677 family.

In terms of biological role, exhibits S-adenosyl-L-methionine-dependent methyltransferase activity. This is Putative S-adenosyl-L-methionine-dependent methyltransferase Mflv_5025 from Mycolicibacterium gilvum (strain PYR-GCK) (Mycobacterium gilvum (strain PYR-GCK)).